A 189-amino-acid polypeptide reads, in one-letter code: MLYLASRSLCRRQLLQRLDIPFQVIDLEIPEVRREDELPQDYVRRVAQEKAQVGLARVGDAFAPKVLGADTEVVLDGRVFGKPVDLAEAATMLAALSGRTHQVMTAVSLVAAGGVAAQVLVVSEVSFALLSQGQIARYVDSGEPMGKAGAYAIQGRGECFVSRLVGSYSGVMGLPLQQTAQLLATFEES.

The Proton acceptor role is filled by D70.

It belongs to the Maf family. A divalent metal cation serves as cofactor.

Its subcellular location is the cytoplasm. The enzyme catalyses a ribonucleoside 5'-triphosphate + H2O = a ribonucleoside 5'-phosphate + diphosphate + H(+). The catalysed reaction is a 2'-deoxyribonucleoside 5'-triphosphate + H2O = a 2'-deoxyribonucleoside 5'-phosphate + diphosphate + H(+). Its function is as follows. Nucleoside triphosphate pyrophosphatase. May have a dual role in cell division arrest and in preventing the incorporation of modified nucleotides into cellular nucleic acids. In Xylella fastidiosa (strain M23), this protein is Nucleoside triphosphate pyrophosphatase.